Consider the following 62-residue polypeptide: Large ribosomal subunit protein bL28 (62 aa).

It belongs to the bacterial ribosomal protein bL28 family.

The polypeptide is Large ribosomal subunit protein bL28 (Caldanaerobacter subterraneus subsp. tengcongensis (strain DSM 15242 / JCM 11007 / NBRC 100824 / MB4) (Thermoanaerobacter tengcongensis)).